The following is a 1104-amino-acid chain: tRNA ligase 1 (1104 aa).

Residue lysine 152 is the N6-AMP-lysine intermediate of the active site.

Belongs to the TRL1 family. Mg(2+) serves as cofactor. In terms of tissue distribution, mainly expressed in proliferating cells and tissues such as root meristems, the vasculature of developing plantlets, flowers and elongating tissue.

The protein resides in the nucleus. It is found in the cytoplasm. It catalyses the reaction ATP + (ribonucleotide)n-3'-hydroxyl + 5'-phospho-(ribonucleotide)m = (ribonucleotide)n+m + AMP + diphosphate.. With respect to regulation, requires the presence of NTP, preferentially ATP rather than dATP, UTP, CTP and GTP, respectively, to mediate ribonucleotide 5'-phosphorylation. Essential component of stress-response pathways entailing repair of RNA breaks with 2',3'-cyclic phosphate and 5'-OH ends. Tri-functional enzyme that repairs RNA breaks with 2',3'-cyclic-PO(4) and 5'-OH ends. The ligation activity requires three sequential enzymatic activities: opening of the 2'3'-cyclic phosphodiester bond of the 5' half-tRNA leaving a 2'-phosphomonoester (CPDase activity), phosphorylation of the 5' terminus of the 3' half-tRNA in the presence of ATP (kinase activity) and ligation of the two tRNA halves in an ATP-dependent reaction (ligase activity). Deficient in transferring AMP to pRNA(OH) to form AppRNA(OH) but proficient at sealing pre-adenylylated AppRNA(OH). CPDase and kinase reactions are almost insensitive to RNA length, whereas the ligase activity decreases with shorter RNA size. Can also splice DNA ended by a single 3'-terminal ribonucleoside 2',3'-cyclic-PO(4). Binds to mRNA, mature and immature. Exhibits tRNA ligase activity in vitro. Required for the splicing of precursor tRNA molecules containing introns. Can circularize an intron cleaved from a pre-tRNA by splicing endonuclease in vitro. Seems not involved in unfolded protein response (UPR) in the endoplasmic reticulum. Involved in auxin signaling and polar transport during organ morphogenesis. This is tRNA ligase 1 from Arabidopsis thaliana (Mouse-ear cress).